Here is a 260-residue protein sequence, read N- to C-terminus: Dolichol-phosphate mannosyltransferase subunit 1 (260 aa).

A disordered region spans residues 1–20 (MAAEEASRSSPRFRREPKGR). The residue at position 2 (Ala2) is an N-acetylalanine. A Phosphoserine modification is found at Ser9. 11 residues coordinate GDP-alpha-D-mannose: Pro32, Tyr34, Glu36, Ile63, Asp65, Asp118, Ala119, Asp120, Arg147, Arg234, and Lys240. Asp120 contributes to the Mg(2+) binding site. Asp120 is a Mn(2+) binding site.

It belongs to the glycosyltransferase 2 family. As to quaternary structure, component of the dolichol-phosphate mannose (DPM) synthase complex composed of DPM1, DPM2 and DPM3; within the complex, directly interacts with DPM3. This interaction may stabilize DPM1. The cofactor is Mg(2+). Requires Mn(2+) as cofactor. It depends on Ca(2+) as a cofactor.

The protein localises to the endoplasmic reticulum. It carries out the reaction a di-trans,poly-cis-dolichyl phosphate + GDP-alpha-D-mannose = a di-trans,poly-cis-dolichyl beta-D-mannosyl phosphate + GDP. It participates in protein modification; protein glycosylation. Transfers mannose from GDP-mannose to dolichol monophosphate to form dolichol phosphate mannose (Dol-P-Man) which is the mannosyl donor in pathways leading to N-glycosylation, glycosyl phosphatidylinositol membrane anchoring, and O-mannosylation of proteins; catalytic subunit of the dolichol-phosphate mannose (DPM) synthase complex. This chain is Dolichol-phosphate mannosyltransferase subunit 1 (DPM1), found in Bos taurus (Bovine).